Here is a 973-residue protein sequence, read N- to C-terminus: Translation initiation factor IF-2 (973 aa).

Positions 52 to 388 (PDQEEVKPAA…QAQKPAQPLE (337 aa)) are disordered. Composition is skewed to basic and acidic residues over residues 83-120 (ESRKKDAAMLDSQKPDRDRVQKNGRERAGKATRADHYK), 128-148 (VPSRPPDRRFQERPKQSDKAR), 157-172 (QGARLKTADFVQERTR), 186-202 (VQQERVQDRQQKERPPF), 210-246 (PQHEHKPQDSVKERPHPERASREADNAKRAERLDKGA), 272-288 (RAGERGARPGGLHETKP), 314-333 (LLDDRRRQTEEKVKVTEKQK), and 343-360 (KSREKRNAMAELAEERLR). A compositionally biased stretch (low complexity) spans 374 to 386 (AKPQEQAQKPAQP). The 170-residue stretch at 472 to 641 (DRPCVVTVMG…LLVAEMSELK (170 aa)) folds into the tr-type G domain. The segment at 481–488 (GHVDHGKT) is G1. A GTP-binding site is contributed by 481–488 (GHVDHGKT). The interval 506–510 (GITQH) is G2. A G3 region spans residues 527–530 (DTPG). GTP contacts are provided by residues 527-531 (DTPGH) and 581-584 (NKID). The G4 stretch occupies residues 581–584 (NKID). The segment at 617-619 (SAL) is G5.

Belongs to the TRAFAC class translation factor GTPase superfamily. Classic translation factor GTPase family. IF-2 subfamily.

It localises to the cytoplasm. Functionally, one of the essential components for the initiation of protein synthesis. Protects formylmethionyl-tRNA from spontaneous hydrolysis and promotes its binding to the 30S ribosomal subunits. Also involved in the hydrolysis of GTP during the formation of the 70S ribosomal complex. In Pelotomaculum thermopropionicum (strain DSM 13744 / JCM 10971 / SI), this protein is Translation initiation factor IF-2.